An 87-amino-acid polypeptide reads, in one-letter code: Conotoxin QcMNCL-XIII0.1 (87 aa).

A signal peptide spans 1-18 (MNCLQLLLVLLLISTIAA). Residues 19-34 (LHGDGRVPQRRGRNIR) constitute a propeptide that is removed on maturation.

In terms of processing, contains 4 disulfide bonds. In terms of tissue distribution, expressed by the venom duct.

Its subcellular location is the secreted. May interact and inhibit Cav3.1/CACNA1G calcium channels. In a ex vivo model, shows ability to block nerve signal transduction. This Conus quercinus (Oak cone) protein is Conotoxin QcMNCL-XIII0.1.